The following is a 179-amino-acid chain: Large ribosomal subunit protein uL5 (179 aa).

Belongs to the universal ribosomal protein uL5 family. As to quaternary structure, part of the 50S ribosomal subunit; part of the 5S rRNA/L5/L18/L25 subcomplex. Contacts the 5S rRNA and the P site tRNA. Forms a bridge to the 30S subunit in the 70S ribosome.

Its function is as follows. This is one of the proteins that bind and probably mediate the attachment of the 5S RNA into the large ribosomal subunit, where it forms part of the central protuberance. In the 70S ribosome it contacts protein S13 of the 30S subunit (bridge B1b), connecting the 2 subunits; this bridge is implicated in subunit movement. Contacts the P site tRNA; the 5S rRNA and some of its associated proteins might help stabilize positioning of ribosome-bound tRNAs. The protein is Large ribosomal subunit protein uL5 of Alkaliphilus oremlandii (strain OhILAs) (Clostridium oremlandii (strain OhILAs)).